We begin with the raw amino-acid sequence, 203 residues long: Alpha-amylase/subtilisin inhibitor (203 aa).

The segment covering 1 to 12 has biased composition (polar residues); the sequence is MGSRRAGSSSSP. An N-terminal signal peptide occupies residues 1 to 22; sequence MGSRRAGSSSSPLFWPAPPSRA. Residues 1–34 are disordered; sequence MGSRRAGSSSSPLFWPAPPSRAADPPPVHDTDGH. Positions 15-26 are enriched in pro residues; the sequence is WPAPPSRAADPP. 2 disulfides stabilise this stretch: C65–C112 and C166–C170.

Belongs to the protease inhibitor I3 (leguminous Kunitz-type inhibitor) family.

In terms of biological role, this protein inhibits independently subtilisin and alpha-amylase. The protein is Alpha-amylase/subtilisin inhibitor of Hordeum vulgare (Barley).